Here is a 560-residue protein sequence, read N- to C-terminus: DNA ligase B (560 aa).

Lys-124 serves as the catalytic N6-AMP-lysine intermediate.

Belongs to the NAD-dependent DNA ligase family. LigB subfamily.

It catalyses the reaction NAD(+) + (deoxyribonucleotide)n-3'-hydroxyl + 5'-phospho-(deoxyribonucleotide)m = (deoxyribonucleotide)n+m + AMP + beta-nicotinamide D-nucleotide.. Its function is as follows. Catalyzes the formation of phosphodiester linkages between 5'-phosphoryl and 3'-hydroxyl groups in double-stranded DNA using NAD as a coenzyme and as the energy source for the reaction. The chain is DNA ligase B from Shigella flexneri.